The sequence spans 136 residues: MSTSCSNPDDQVKARNDKFMAALNDATDIDLVMSFFSPDVSYSDFAFEAVNMDFTSTRDYMDKMFHAVDDLHLTQVSLTGDKDFTASEWVMTYKLKSSDKVGEVVKMRGVSLSWYDAQGLIVRNNDYSLKWSGDID.

Belongs to the aurE cyclase family.

It participates in polyketide biosynthesis. Its function is as follows. Cyclase; part of the gene cluster that mediates the biosynthesis of aurovertins, fungal polyketides that exhibit potent inhibition of adenosine triphosphate synthase. Tha biosynthesis starts with the HR-PKS aurA that selects propionate as the starter unit; synthesizes a hexa-ene chain through the repeated functions of the KR and DH domains in the first six iterations; selectively introduces three alpha-methyl substitutions at C4, C6, and C16 using the S-adensylmethionine-dependent cMET; and shuts off KR and DH in the last three iterations to afford a 1,3,5-triketo portion that can undergo intramolecular cyclization to yield the alpha-pyrone intermediate. AurE may act as a cyclase and enhances the rate of pyrone formation and product release of aurA. The methyltransferase aurB then methylates the C17 hydroxyl group. C17 methylation is required to initiate epoxidation by the downstream monooxygenase aurC. The monooxygenase aurC and the epoxide hydrolase aurD can iteratively transform the terminal triene portion of the methylated precursor into the dioxabicyclo[3.2.1]octane scaffold of aurovertin E. Epoxidation modifications of the precursor occur in two separate steps; bis-epoxidation of the two terminal olefins takes place first, followed by another epoxidation that occurs at C7-C8 after tetrahydrofuran formation. The O-acyltransferase aurG converts aurovertin E to aurovertin A. The sequence is that of Cyclase aurE from Calcarisporium arbuscula (Dendryphion arbuscula).